Here is a 433-residue protein sequence, read N- to C-terminus: Glutamate-1-semialdehyde 2,1-aminomutase (433 aa).

N6-(pyridoxal phosphate)lysine is present on Lys271.

It belongs to the class-III pyridoxal-phosphate-dependent aminotransferase family. HemL subfamily. In terms of assembly, homodimer. It depends on pyridoxal 5'-phosphate as a cofactor.

It is found in the cytoplasm. It catalyses the reaction (S)-4-amino-5-oxopentanoate = 5-aminolevulinate. It participates in porphyrin-containing compound metabolism; protoporphyrin-IX biosynthesis; 5-aminolevulinate from L-glutamyl-tRNA(Glu): step 2/2. Its pathway is porphyrin-containing compound metabolism; chlorophyll biosynthesis. The sequence is that of Glutamate-1-semialdehyde 2,1-aminomutase from Prochlorococcus marinus subsp. pastoris (strain CCMP1986 / NIES-2087 / MED4).